Reading from the N-terminus, the 1462-residue chain is DNA topoisomerase 2 (1462 aa).

Residues Asn-79, Asn-108, 136-138, and 149-156 each bind ATP; these read SSN and GRNGYGAK. The segment at 332–334 is interaction with DNA; sequence NKK. 365–367 serves as a coordination point for ATP; it reads QTK. One can recognise a Toprim domain in the interval 442 to 556; the sequence is CTLILTEGDS…SLLKVPSFLV (115 aa). Residues Glu-448, Asp-525, and Asp-527 each contribute to the Mg(2+) site. One can recognise a Topo IIA-type catalytic domain in the interval 671-1131; that stretch reads KDFVNKELIL…PTTSLWLKDL (461 aa). The O-(5'-phospho-DNA)-tyrosine intermediate role is filled by Tyr-761. The tract at residues 947–956 is interaction with DNA; it reads KLTSTISTSN. Disordered regions lie at residues 1040–1077 and 1147–1462; these read PMPR…SVSV and EDDR…EDDD. Acidic residues predominate over residues 1056–1068; sequence NDDDSEEQEDAEP. A compositionally biased stretch (basic residues) spans 1167 to 1181; that stretch reads PAKKPPQPRKNTKKA. Low complexity predominate over residues 1198-1207; it reads AVEAAKPAEV. The segment covering 1240-1250 has biased composition (polar residues); that stretch reads IESSGEKSQAM. Positions 1260–1275 are enriched in basic residues; that stretch reads AGKKQNNKRGGAKKKS. A compositionally biased stretch (acidic residues) spans 1282-1300; that stretch reads SDSDNEVNDVDDDDDDFEE. 2 stretches are compositionally biased toward low complexity: residues 1314–1334 and 1419–1430; these read KPAA…APAA and APQPARARPQRA. The segment covering 1442 to 1462 has biased composition (acidic residues); the sequence is SESEEDSDEDAELSDFEEDDD.

The protein belongs to the type II topoisomerase family. As to quaternary structure, homodimer. Requires Mg(2+) as cofactor. The cofactor is Mn(2+). Ca(2+) serves as cofactor. Abundant in proliferative tissues.

The enzyme catalyses ATP-dependent breakage, passage and rejoining of double-stranded DNA.. In terms of biological role, control of topological states of DNA by transient breakage and subsequent rejoining of DNA strands. Topoisomerase II makes double-strand breaks. The protein is DNA topoisomerase 2 (TOP2) of Pisum sativum (Garden pea).